A 465-amino-acid polypeptide reads, in one-letter code: Probable citrate synthase, mitochondrial (465 aa).

Catalysis depends on residues His-303, His-349, and Asp-404.

It belongs to the citrate synthase family. As to quaternary structure, homodimer.

Its subcellular location is the mitochondrion matrix. It catalyses the reaction oxaloacetate + acetyl-CoA + H2O = citrate + CoA + H(+). The protein operates within carbohydrate metabolism; tricarboxylic acid cycle; isocitrate from oxaloacetate: step 1/2. In Glossina morsitans morsitans (Savannah tsetse fly), this protein is Probable citrate synthase, mitochondrial.